The sequence spans 60 residues: Large ribosomal subunit protein uL30 (60 aa).

It belongs to the universal ribosomal protein uL30 family. In terms of assembly, part of the 50S ribosomal subunit.

This chain is Large ribosomal subunit protein uL30, found in Desulforapulum autotrophicum (strain ATCC 43914 / DSM 3382 / VKM B-1955 / HRM2) (Desulfobacterium autotrophicum).